A 168-amino-acid polypeptide reads, in one-letter code: Cyclin-dependent kinase 4 inhibitor C (168 aa).

4 ANK repeats span residues 4–33 (PWGN…NVNA), 37–65 (FGRT…NPDL), 69–98 (TGFA…DVNI), and 102–132 (EGNL…NVGH).

Belongs to the CDKN2 cyclin-dependent kinase inhibitor family. Heterodimer of p18 with CDK6. In terms of tissue distribution, highest levels found in skeletal muscle. Also found in pancreas and heart.

Its function is as follows. Interacts strongly with CDK6, weakly with CDK4. Inhibits cell growth and proliferation with a correlated dependence on endogenous retinoblastoma protein RB. The protein is Cyclin-dependent kinase 4 inhibitor C (CDKN2C) of Homo sapiens (Human).